The following is a 241-amino-acid chain: Beta-nerve growth factor (241 aa).

The signal sequence occupies residues 1–18 (MSMLFYTLITAFLIGTQA). The propeptide occupies 19–121 (EPHSESNVPA…PFNRTHRSKR (103 aa)). 3 N-linked (GlcNAc...) asparagine glycosylation sites follow: asparagine 69, asparagine 114, and asparagine 166. Disulfide bonds link cysteine 136–cysteine 201, cysteine 179–cysteine 229, and cysteine 189–cysteine 231. Residues tyrosine 173 and lysine 209 each coordinate a 1-acyl-sn-glycero-3-phospho-(1D-myo-inositol). Position 209 (lysine 209) interacts with a 1-acyl-sn-glycero-3-phospho-L-serine.

This sequence belongs to the NGF-beta family. Homodimer. The homodimer interacts with a single NTRK1 chain. The homodimer interacts with a single NGFR chain. The NGF dimer interacts with a single SORCS2 chain (via extracellular domain). The NGF precursor (proNGF) binds to a receptor complex formed by SORT1 and NGFR, which leads to NGF endocytosis. Both mature NGF and the immature NGF precursor (proNGF) interact with SORCS2 and with the heterodimer formed by SORCS2 and NGFR (via extracellular domains). The NGF precursor (proNGF) has much higher affinity for SORCS2 than mature NGF. The NGF precursor (proNGF) has much higher affinity for SORT1 than mature NGF. Interacts with ADAM10 in a divalent cation-dependent manner. Interacts with SORCS3.

It is found in the secreted. The protein resides in the endosome lumen. In terms of biological role, nerve growth factor is important for the development and maintenance of the sympathetic and sensory nervous systems. Extracellular ligand for the NTRK1 and NGFR receptors, activates cellular signaling cascades to regulate neuronal proliferation, differentiation and survival. The immature NGF precursor (proNGF) functions as a ligand for the heterodimeric receptor formed by SORCS2 and NGFR, and activates cellular signaling cascades that lead to inactivation of RAC1 and/or RAC2, reorganization of the actin cytoskeleton and neuronal growth cone collapse. In contrast to mature NGF, the precursor form (proNGF) promotes neuronal apoptosis (in vitro). Inhibits metalloproteinase-dependent proteolysis of platelet glycoprotein VI. Binds lysophosphatidylinositol and lysophosphatidylserine between the two chains of the homodimer. The lipid-bound form promotes histamine relase from mast cells, contrary to the lipid-free form. This chain is Beta-nerve growth factor (NGF), found in Pan troglodytes (Chimpanzee).